The chain runs to 370 residues: Pantothenate kinase 3 (370 aa).

Residue Glu138 is the Proton acceptor of the active site. Residues Ser192, Ser195, and Arg207 each coordinate acetyl-CoA.

This sequence belongs to the type II pantothenate kinase family. As to quaternary structure, homodimer. In terms of tissue distribution, highly expressed in the liver.

The protein resides in the cytoplasm. It catalyses the reaction (R)-pantothenate + ATP = (R)-4'-phosphopantothenate + ADP + H(+). Its pathway is cofactor biosynthesis; coenzyme A biosynthesis; CoA from (R)-pantothenate: step 1/5. With respect to regulation, subject to allosteric regulation, exists in two distinct conformational states, a catalytically incompetent (or open) conformation stabilized by the binding of acetyl(acyl)-CoA, and a catalytically competent (or closed) conformation stabilized by ATP-binding. Acetyl-CoA and its thioesters act as allosteric inhibitors and compete with the ATP-binding site. Strongly inhibited by acetyl-CoA, malonyl-CoA and palmitoyl CoA and modestly inhibited by CoA. Inhibited by calcium hopantenate. Catalyzes the phosphorylation of pantothenate to generate 4'-phosphopantothenate in the first and rate-determining step of coenzyme A (CoA) synthesis. The protein is Pantothenate kinase 3 (Pank3) of Mus musculus (Mouse).